Reading from the N-terminus, the 861-residue chain is Semaphorin-4D (861 aa).

The signal sequence occupies residues M1–A23. The Sema domain occupies F24–L500. Topologically, residues F24–R733 are extracellular. N-linked (GlcNAc...) asparagine glycans are attached at residues N49 and N77. Disulfide bonds link C97–C108 and C126–C135. N-linked (GlcNAc...) asparagine glycans are attached at residues N139 and N191. 2 disulfides stabilise this stretch: C257–C370 and C281–C326. Residues N379 and N419 are each glycosylated (N-linked (GlcNAc...) asparagine). The PSI domain maps to F502–S551. Disulfide bonds link C503–C520, C509–C553, C512–C529, and C576–C624. The region spanning D555–S636 is the Ig-like C2-type domain. Residues N613 and N632 are each glycosylated (N-linked (GlcNAc...) asparagine). The interval V649–P709 is disordered. A compositionally biased stretch (polar residues) spans T657 to S681. A helical membrane pass occupies residues L734–C754. Topologically, residues Y755–D861 are cytoplasmic. S782 and S832 each carry phosphoserine. A disordered region spans residues V793–S839. A compositionally biased stretch (basic and acidic residues) spans P826–S839.

It belongs to the semaphorin family. Homodimer. Interacts with PLXNB1. Interacts with PLXNB2. In terms of tissue distribution, strongly expressed in lymphoid tissues, especially in the thymus, as well as in the nervous tissues. Expressed in neurons and glia in the developing hippocampus.

It localises to the cell membrane. Cell surface receptor for PLXNB1 and PLXNB2 that plays an important role in cell-cell signaling. Regulates GABAergic synapse development. Promotes the development of inhibitory synapses in a PLXNB1-dependent manner. Modulates the complexity and arborization of developing neurites in hippocampal neurons by activating PLXNB1 and interaction with PLXNB1 mediates activation of RHOA. Promotes the migration of cerebellar granule cells. Plays a role in the immune system; induces B-cells to aggregate and improves their viability (in vitro). Induces endothelial cell migration through the activation of PTK2B/PYK2, SRC, and the phosphatidylinositol 3-kinase-AKT pathway. This is Semaphorin-4D (Sema4d) from Mus musculus (Mouse).